We begin with the raw amino-acid sequence, 91 residues long: MMKRRNSFNNSYVSVNNRTGFRRSKVCPLAASKDEDIDYKNIDLLSKFTSDYGRILPRRLTGVCAKKQRKLRLAIIRARFLALIPYCTKKV.

The protein belongs to the bacterial ribosomal protein bS18 family. As to quaternary structure, part of the 30S ribosomal subunit. Forms a tight heterodimer with protein bS6.

In terms of biological role, binds as a heterodimer with protein bS6 to the central domain of the 16S rRNA, where it helps stabilize the platform of the 30S subunit. The polypeptide is Small ribosomal subunit protein bS18 (Wolbachia pipientis wMel).